Consider the following 299-residue polypeptide: Ribosomal protein L11 methyltransferase (299 aa).

Residues Thr-144, Gly-165, Asp-187, and Asn-229 each coordinate S-adenosyl-L-methionine.

This sequence belongs to the methyltransferase superfamily. PrmA family.

It is found in the cytoplasm. The catalysed reaction is L-lysyl-[protein] + 3 S-adenosyl-L-methionine = N(6),N(6),N(6)-trimethyl-L-lysyl-[protein] + 3 S-adenosyl-L-homocysteine + 3 H(+). Its function is as follows. Methylates ribosomal protein L11. This Teredinibacter turnerae (strain ATCC 39867 / T7901) protein is Ribosomal protein L11 methyltransferase.